The following is a 637-amino-acid chain: Pentatricopeptide repeat-containing protein At1g12300, mitochondrial (637 aa).

The transit peptide at 1–95 directs the protein to the mitochondrion; it reads MVKLMIRRLS…PTVIDFSRLF (95 aa). PPR repeat units lie at residues 87–121, 122–156, 157–191, 192–226, 227–261, 262–296, 297–331, 332–366, 367–401, 402–436, 437–471, 472–506, 507–541, 542–576, and 577–611; these read TVIDFSRLFSAIAKTKQYDLVLALCKQMELKGIAH, NLYTLSIMINCFCRCRKLCLAFSAMGKIIKLGYEP, NTITFSTLINGLCLEGRVSEALELVDRMVEMGHKP, DLITINTLVNGLCLSGKEAEAMLLIDKMVEYGCQP, NAVTYGPVLNVMCKSGQTALAMELLRKMEERNIKL, DAVKYSIIIDGLCKHGSLDNAFNLFNEMEMKGITT, NIITYNILIGGFCNAGRWDDGAKLLRDMIKRKINP, NVVTFSVLIDSFVKEGKLREAEELHKEMIHRGIAP, DTITYTSLIDGFCKENHLDKANQMVDLMVSKGCDP, NIRTFNILINGYCKANRIDDGLELFRKMSLRGVVA, DTVTYNTLIQGFCELGKLNVAKELFQEMVSRKVPP, NIVTYKILLDGLCDNGESEKALEIFEKIEKSKMEL, DIGIYNIIIHGMCNASKVDDAWDLFCSLPLKGVKP, GVKTYNIMIGGLCKKGPLSEAELLFRKMEEDGHAP, and DGWTYNILIRAHLGDGDATKSVKLIEELKRCGFSV.

Belongs to the PPR family. P subfamily.

It localises to the mitochondrion. This is Pentatricopeptide repeat-containing protein At1g12300, mitochondrial from Arabidopsis thaliana (Mouse-ear cress).